Reading from the N-terminus, the 137-residue chain is Small ribosomal subunit protein uS11 (137 aa).

Disordered stretches follow at residues 1-31 (MPPK…AAHI) and 117-137 (TISD…RRRV). The span at 12–21 (KTQKARRRDK) shows a compositional bias: basic residues.

Belongs to the universal ribosomal protein uS11 family. Part of the 30S ribosomal subunit. Interacts with proteins S7 and S18. Binds to IF-3.

Its function is as follows. Located on the platform of the 30S subunit, it bridges several disparate RNA helices of the 16S rRNA. Forms part of the Shine-Dalgarno cleft in the 70S ribosome. The chain is Small ribosomal subunit protein uS11 from Rhodococcus jostii (strain RHA1).